Consider the following 228-residue polypeptide: Phosphoglycolate phosphatase (228 aa).

Aspartate 9 (nucleophile) is an active-site residue. Mg(2+) is bound by residues aspartate 9 and aspartate 11. Lysine 151 contributes to the substrate binding site. The Mg(2+) site is built by aspartate 174 and aspartate 178.

This sequence belongs to the archaeal SPP-like hydrolase family. The cofactor is Mg(2+).

The catalysed reaction is 2-phosphoglycolate + H2O = glycolate + phosphate. Functionally, catalyzes the dephosphorylation of 2-phosphoglycolate. This is Phosphoglycolate phosphatase from Pyrobaculum islandicum (strain DSM 4184 / JCM 9189 / GEO3).